A 772-amino-acid chain; its full sequence is Mitochondrial intermediate peptidase (772 aa).

A mitochondrion-targeting transit peptide spans 1–42 (MFANSARNALKKRPQNLQPFRFQGCLFSKRANRPLTTKVQHL). Histidine 556 contacts Zn(2+). Glutamate 557 is an active-site residue. Positions 560 and 563 each coordinate Zn(2+).

It belongs to the peptidase M3 family. Requires Zn(2+) as cofactor.

The protein localises to the mitochondrion matrix. The catalysed reaction is Release of an N-terminal octapeptide as second stage of processing of some proteins imported into the mitochondrion.. Its function is as follows. Cleaves proteins, imported into the mitochondrion, to their mature size. While most mitochondrial precursor proteins are processed to the mature form in one step by mitochondrial processing peptidase (MPP), the sequential cleavage by MIP of an octapeptide after initial processing by MPP is a required step for a subgroup of nuclear-encoded precursor proteins destined for the matrix or the inner membrane. This chain is Mitochondrial intermediate peptidase (OCT1), found in Laccaria bicolor (strain S238N-H82 / ATCC MYA-4686) (Bicoloured deceiver).